The following is a 359-amino-acid chain: Aminomethyltransferase (359 aa).

It belongs to the GcvT family. In terms of assembly, the glycine cleavage system is composed of four proteins: P, T, L and H.

The catalysed reaction is N(6)-[(R)-S(8)-aminomethyldihydrolipoyl]-L-lysyl-[protein] + (6S)-5,6,7,8-tetrahydrofolate = N(6)-[(R)-dihydrolipoyl]-L-lysyl-[protein] + (6R)-5,10-methylene-5,6,7,8-tetrahydrofolate + NH4(+). The glycine cleavage system catalyzes the degradation of glycine. This Pseudoalteromonas atlantica (strain T6c / ATCC BAA-1087) protein is Aminomethyltransferase.